Reading from the N-terminus, the 687-residue chain is Chloride channel protein ClC-Ka (687 aa).

4 helical membrane passes run 52–72 (FLMT…FALG), 161–181 (LFLG…AYLG), 202–222 (VAGA…GVLF), and 236–256 (YWRG…LAVF). The Ca(2+) site is built by E259, E261, D278, and E281. The next 6 helical transmembrane spans lie at 282–302 (IFFF…YLYC), 325–345 (PLYA…PGVG), 396–416 (FTIF…LILA), 417–437 (TTIP…AAIG), 452–472 (IVAG…AGAA), and 486–506 (LLAF…MAVL). Residues 507–687 (AANAIAQSCQ…SALTNPPPAK (181 aa)) are Cytoplasmic-facing. 2 consecutive CBS domains span residues 551 to 612 (MRRA…ARAS) and 628 to 686 (TEPV…PPPA).

The protein belongs to the chloride channel (TC 2.A.49) family. CLCNKA subfamily. Homodimer. Interacts with BSND. Expressed predominantly in the kidney.

It is found in the basolateral cell membrane. The catalysed reaction is chloride(in) = chloride(out). It carries out the reaction bromide(in) = bromide(out). It catalyses the reaction nitrate(in) = nitrate(out). The enzyme catalyses iodide(out) = iodide(in). Functionally, anion-selective channel permeable to small monovalent anions with ion selectivity for chloride &gt; bromide &gt; nitrate &gt; iodide. Forms a homodimeric channel where each subunit has its own ion conduction pathway. May conduct double-barreled currents controlled by two types of gates, two fast gates that control each subunit independently and a slow common gate that opens and shuts off both subunits simultaneously. Assembles with the regulatory subunit BSND/Barttin for sorting at the basolateral plasma membrane domain and functional switch to the ion conducting state. CLCNKA:BSND channels display mostly a linear current-voltage relationship with fast gating at negative potentials. Mediates transepithelial chloride transport from the lumen to interstitial compartment along the thin ascending limb of Henle's loop, contributing to generation of hypertonic medullary interstitium as a countercurrent system to achieve urine concentration. Conducts chloride currents in the stria vascularis of the inner ear to establish the endocochlear potential necessary for normal hearing. The chain is Chloride channel protein ClC-Ka (CLCNKA) from Oryctolagus cuniculus (Rabbit).